The chain runs to 785 residues: Cullin-3 (785 aa).

Positions 715 to 777 (SRKHQADACI…REYLQRQADN (63 aa)) constitute a Cullin neddylation domain. A Glycyl lysine isopeptide (Lys-Gly) (interchain with G-Cter in NEDD8) cross-link involves residue K729.

Belongs to the cullin family. Probable component of multiple cullin-RING-based BC3B (BTB-CUL3-BTB) E3 ubiquitin-protein ligase complexes formed by cul-3, rbx-1 and a variable BTB domain-containing protein as adapter and substrate recognition component. Interacts with btb1, btb2, btb3, nedd8 and pip1. Neddylated; enhancing the ubiquitin-ligase activity.

The protein resides in the cytoplasm. It participates in protein modification; protein ubiquitination. In terms of biological role, probable core component of multiple cullin-RING-based BC3B (BTB-CUL3-BTB) E3 ubiquitin-protein ligase complexes which mediate the ubiquitination and subsequent proteasomal degradation of target proteins. As a scaffold protein may contribute to catalysis through positioning of the substrate and the ubiquitin-conjugating enzyme. The functional specificity of the BC3B complex depends on the substrate recognition component. Involved in ubiquitin-mediated degradation of btb3. The chain is Cullin-3 (cul3) from Schizosaccharomyces pombe (strain 972 / ATCC 24843) (Fission yeast).